Reading from the N-terminus, the 203-residue chain is Pyridoxal 5'-phosphate synthase subunit PdxT (203 aa).

Residue 52 to 54 (GES) participates in L-glutamine binding. Cys-84 acts as the Nucleophile in catalysis. Residues Arg-116 and 144–145 (IR) contribute to the L-glutamine site. Residues His-184 and Glu-186 each act as charge relay system in the active site.

The protein belongs to the glutaminase PdxT/SNO family. In terms of assembly, in the presence of PdxS, forms a dodecamer of heterodimers. Only shows activity in the heterodimer.

It carries out the reaction aldehydo-D-ribose 5-phosphate + D-glyceraldehyde 3-phosphate + L-glutamine = pyridoxal 5'-phosphate + L-glutamate + phosphate + 3 H2O + H(+). The catalysed reaction is L-glutamine + H2O = L-glutamate + NH4(+). It participates in cofactor biosynthesis; pyridoxal 5'-phosphate biosynthesis. Catalyzes the hydrolysis of glutamine to glutamate and ammonia as part of the biosynthesis of pyridoxal 5'-phosphate. The resulting ammonia molecule is channeled to the active site of PdxS. The protein is Pyridoxal 5'-phosphate synthase subunit PdxT of Aeropyrum pernix (strain ATCC 700893 / DSM 11879 / JCM 9820 / NBRC 100138 / K1).